Here is a 280-residue protein sequence, read N- to C-terminus: MEKIALITDSTSDVDKDMIEKYDIKVLPLRIIYKDKEYIDRVTISPREVYDNLHIEVPSTSLPSMGDMESLYEKLEAEGYTHVIGVTISSNLSGTYNSLKLVSEGHENIKSFIFDSRSITMGEGAIIKECGEMILQGKNFDYIVEKMPKMRENIKVYYIVDTLKYLIKGGRIGKVSGTVGQLLDIKPIISINEEGVYYTHCKAKGKKQAIKKLIEILRRTLSEKHCDIWVMHGGAYDEIDKLKDLVSGIENINNLNSGEISPVAGVHTGPGLLGVVIFKK.

The 276-residue stretch at 4-279 folds into the DegV domain; it reads IALITDSTSD…PGLLGVVIFK (276 aa). Positions 60 and 93 each coordinate hexadecanoate.

Its function is as follows. May bind long-chain fatty acids, such as palmitate, and may play a role in lipid transport or fatty acid metabolism. This chain is DegV domain-containing protein CA_C1624, found in Clostridium acetobutylicum (strain ATCC 824 / DSM 792 / JCM 1419 / IAM 19013 / LMG 5710 / NBRC 13948 / NRRL B-527 / VKM B-1787 / 2291 / W).